The chain runs to 382 residues: Galactokinase (382 aa).

Position 34 to 37 (34 to 37 (EHTD)) interacts with substrate. 124 to 130 (GAGLSSS) contacts ATP. Ser-130 and Glu-162 together coordinate Mg(2+). The Proton acceptor role is filled by Asp-174. Tyr-223 is a substrate binding site.

The protein belongs to the GHMP kinase family. GalK subfamily.

It localises to the cytoplasm. The enzyme catalyses alpha-D-galactose + ATP = alpha-D-galactose 1-phosphate + ADP + H(+). It participates in carbohydrate metabolism; galactose metabolism. In terms of biological role, catalyzes the transfer of the gamma-phosphate of ATP to D-galactose to form alpha-D-galactose-1-phosphate (Gal-1-P). The sequence is that of Galactokinase from Salmonella typhi.